The primary structure comprises 453 residues: Chromosomal replication initiator protein DnaA (453 aa).

The interval 1-74 (MKEKQFWNRI…GFEIYDAEIT (74 aa)) is domain I, interacts with DnaA modulators. The segment at 74–113 (TPHYIFTKPQDTTSSQVEEATNLTLYDYSPKLVSIPYSDT) is domain II. Positions 114–331 (GLKEKYTFDN…GAINDITLIA (218 aa)) are domain III, AAA+ region. ATP contacts are provided by Gly158, Gly160, Lys161, and Thr162. Residues 332 to 453 (RVKKIKDITI…EIESIKKKIK (122 aa)) are domain IV, binds dsDNA.

This sequence belongs to the DnaA family. Oligomerizes as a right-handed, spiral filament on DNA at oriC.

It is found in the cytoplasm. Functionally, plays an essential role in the initiation and regulation of chromosomal replication. ATP-DnaA binds to the origin of replication (oriC) to initiate formation of the DNA replication initiation complex once per cell cycle. Binds the DnaA box (a 9 base pair repeat at the origin) and separates the double-stranded (ds)DNA. Forms a right-handed helical filament on oriC DNA; dsDNA binds to the exterior of the filament while single-stranded (ss)DNA is stabiized in the filament's interior. The ATP-DnaA-oriC complex binds and stabilizes one strand of the AT-rich DNA unwinding element (DUE), permitting loading of DNA polymerase. After initiation quickly degrades to an ADP-DnaA complex that is not apt for DNA replication. Binds acidic phospholipids. This chain is Chromosomal replication initiator protein DnaA, found in Streptococcus pneumoniae (strain P1031).